Here is a 518-residue protein sequence, read N- to C-terminus: Sugar transport protein MST3 (518 aa).

Over 1 to 18 (MAGGAVVSTGAGKDYPGK) the chain is Cytoplasmic. A helical transmembrane segment spans residues 19 to 39 (LTLFVFFTCVVAATGGLIFGY). Over 40 to 80 (DIGISGGVTSMDPFLRKFFPEVYRKKQMADKNNQYCKYDNQ) the chain is Extracellular. Residues 81–101 (LLQTFTSSLYLAALVSSFFAA) form a helical membrane-spanning segment. Residues 102–117 (TVTRVLGRKWSMFAGG) are Cytoplasmic-facing. Residues 118 to 138 (LTFLIGAALNGAAENVAMLIV) traverse the membrane as a helical segment. Residues 139–140 (GR) are Extracellular-facing. Residues 141 to 161 (ILLGVGVGFANQSVPVYLSEM) form a helical membrane-spanning segment. Over 162-167 (APARLR) the chain is Cytoplasmic. Residues 168–188 (GMLNIGFQLMITIGILAAELI) traverse the membrane as a helical segment. The Extracellular segment spans residues 189–202 (NYGTAKIKAGWGWR). The helical transmembrane segment at 203–223 (VSLALAAVPAAIITLGSLFLP) threads the bilayer. The Cytoplasmic segment spans residues 224 to 290 (DTPNSLIDRG…YRAQLTMAIC (67 aa)). A helical transmembrane segment spans residues 291 to 311 (IPFFQQLTGINVIMFYAPVLF). Residues 312–322 (DTLGFKSDASL) lie on the Extracellular side of the membrane. Residues 323-343 (MSAVITGLVNVFATLVSIFTV) form a helical membrane-spanning segment. Residues 344–351 (DRLGRRKL) lie on the Cytoplasmic side of the membrane. The chain crosses the membrane as a helical span at residues 352–372 (FLQGGAQMVVCQVVVGTLIAV). The Extracellular portion of the chain corresponds to 373–387 (KFGTSGIGDIPKGYA). A helical membrane pass occupies residues 388-408 (AVVVLFICMYVAGFAWSWGPL). Residues 409-427 (GWLVPSEIFPLEIRPAGQS) lie on the Cytoplasmic side of the membrane. A helical transmembrane segment spans residues 428-448 (INVSVNMLFTFVIAQAFLTML). The Extracellular portion of the chain corresponds to 449–452 (CHMK). The chain crosses the membrane as a helical span at residues 453–473 (FGLFYFFAGWVVIMTVFIALF). Residues 474–518 (LPETKNVPIEEMVLVWKSHWFWRRFIGDHDVHVGANHVSNNKLQP) are Cytoplasmic-facing.

The protein belongs to the major facilitator superfamily. Sugar transporter (TC 2.A.1.1) family. As to expression, highly expressed in roots. Expressed in xylem and sclerenchyma cells of roots. Expressed at low levels in leaves.

Its subcellular location is the membrane. Mediates active uptake of hexoses by sugar:proton symport. Can transport glucose, xylose and 3-O-methylglucose. May be involved in the accumulation of monosaccharides required for cell wall synthesis during root development. The protein is Sugar transport protein MST3 of Oryza sativa subsp. japonica (Rice).